The primary structure comprises 195 residues: Cysteine/O-acetylserine efflux protein (195 aa).

5 consecutive transmembrane segments (helical) span residues 47–67, 70–90, 105–125, 142–162, and 177–194; these read SLGF…LAVI, AAVH…AWKI, ISFW…LYGV, VVGV…CWAL, and QLNI…VRIF.

This sequence belongs to the Rht family.

The protein localises to the cell inner membrane. It catalyses the reaction O-acetyl-L-serine(in) = O-acetyl-L-serine(out). The enzyme catalyses L-cysteine(in) = L-cysteine(out). Its function is as follows. Exporter of O-acetylserine (OAS) and cysteine. This is Cysteine/O-acetylserine efflux protein (eamB) from Shigella boydii serotype 4 (strain Sb227).